Consider the following 405-residue polypeptide: uncharacterized protein (405 aa).

Disordered stretches follow at residues 1 to 21 (MSKK…ESKT), 150 to 179 (IKDE…QEGP), and 285 to 405 (DDED…KSRS). A compositionally biased stretch (polar residues) spans 7-16 (KNASPKNNSD). 2 stretches are compositionally biased toward acidic residues: residues 312 to 331 (SDDE…DDEE) and 349 to 358 (DDEDDEEEGE). Basic residues-rich tracts occupy residues 365–374 (SSKKSSKKAS) and 390–405 (PKKK…KSRS).

This is an uncharacterized protein from Acanthamoeba polyphaga (Amoeba).